The primary structure comprises 195 residues: Putative manganese efflux pump MntP (195 aa).

The next 6 membrane-spanning stretches (helical) occupy residues 4–24 (ILIT…SLAM), 39–59 (FVLT…NLGL), 64–84 (FLGV…GWQM), 120–140 (ILLL…TLGT), 145–165 (ILIT…VGFA), and 175–195 (GSYA…KFVV).

The protein belongs to the MntP (TC 9.B.29) family.

The protein resides in the cell membrane. Its function is as follows. Probably functions as a manganese efflux pump. The protein is Putative manganese efflux pump MntP of Syntrophomonas wolfei subsp. wolfei (strain DSM 2245B / Goettingen).